Reading from the N-terminus, the 194-residue chain is ATP-dependent Clp protease proteolytic subunit (194 aa).

Ser98 acts as the Nucleophile in catalysis. His123 is a catalytic residue.

This sequence belongs to the peptidase S14 family. As to quaternary structure, fourteen ClpP subunits assemble into 2 heptameric rings which stack back to back to give a disk-like structure with a central cavity, resembling the structure of eukaryotic proteasomes.

The protein resides in the cytoplasm. The catalysed reaction is Hydrolysis of proteins to small peptides in the presence of ATP and magnesium. alpha-casein is the usual test substrate. In the absence of ATP, only oligopeptides shorter than five residues are hydrolyzed (such as succinyl-Leu-Tyr-|-NHMec, and Leu-Tyr-Leu-|-Tyr-Trp, in which cleavage of the -Tyr-|-Leu- and -Tyr-|-Trp bonds also occurs).. Cleaves peptides in various proteins in a process that requires ATP hydrolysis. Has a chymotrypsin-like activity. Plays a major role in the degradation of misfolded proteins. This chain is ATP-dependent Clp protease proteolytic subunit, found in Syntrophus aciditrophicus (strain SB).